Reading from the N-terminus, the 299-residue chain is Ribosomal RNA small subunit methyltransferase H (299 aa).

Residues 32–34, aspartate 52, phenylalanine 79, aspartate 100, and glutamine 107 each bind S-adenosyl-L-methionine; that span reads AGH.

This sequence belongs to the methyltransferase superfamily. RsmH family.

It localises to the cytoplasm. It carries out the reaction cytidine(1402) in 16S rRNA + S-adenosyl-L-methionine = N(4)-methylcytidine(1402) in 16S rRNA + S-adenosyl-L-homocysteine + H(+). In terms of biological role, specifically methylates the N4 position of cytidine in position 1402 (C1402) of 16S rRNA. This is Ribosomal RNA small subunit methyltransferase H from Mycoplasmopsis pulmonis (strain UAB CTIP) (Mycoplasma pulmonis).